A 561-amino-acid polypeptide reads, in one-letter code: Sperm-tail PG-rich repeat-containing protein 2 (561 aa).

3 STPGR repeats span residues 21 to 34, 63 to 72, and 97 to 104; these read VGPG…PKQQ, PGPAHYNVSQ, and GPGPGSYN. Positions 123–143 are disordered; that stretch reads PAVSRNIDIPSIPSSGKSHGY. STPGR repeat units follow at residues 164 to 191, 200 to 210, 250 to 285, 292 to 299, 334 to 367, 421 to 438, and 471 to 481; these read GPAY…NATG, GPGPGQYDIIQ, PGPG…TERF, TPAPGTYN, LPGP…FGSS, LPAP…MSQV, and GPGPATYSPVL.

The polypeptide is Sperm-tail PG-rich repeat-containing protein 2 (Stpg2) (Mus musculus (Mouse)).